We begin with the raw amino-acid sequence, 489 residues long: Mitochondrial-processing peptidase subunit beta (489 aa).

The N-terminal 45 residues, 1–45 (MAAAAVSRTLLPVAGRRLWGFTRRLPLRAAAAQPLYFGGDRLRST), are a transit peptide targeting the mitochondrion. Residue His-101 coordinates Zn(2+). Glu-104 acts as the Proton acceptor in catalysis. Positions 105 and 181 each coordinate Zn(2+).

The protein belongs to the peptidase M16 family. As to quaternary structure, heterodimer of PMPCA (alpha) and PMPCB (beta) subunits, forming the mitochondrial processing protease (MPP) in which PMPCA is involved in substrate recognition and binding and PMPCB is the catalytic subunit. Zn(2+) serves as cofactor.

The protein resides in the mitochondrion matrix. The enzyme catalyses Release of N-terminal transit peptides from precursor proteins imported into the mitochondrion, typically with Arg in position P2.. With respect to regulation, binding to PMPCA is required for catalytic activity. Its function is as follows. Catalytic subunit of the essential mitochondrial processing protease (MPP), which cleaves the mitochondrial sequence off newly imported precursors proteins. Preferentially, cleaves after an arginine at position P2. Required for PINK1 turnover by coupling PINK1 mitochondrial import and cleavage, which results in subsequent PINK1 proteolysis. In Rattus norvegicus (Rat), this protein is Mitochondrial-processing peptidase subunit beta (Pmpcb).